The sequence spans 480 residues: Ammonium transporter 2 member 4 (480 aa).

Over 1 to 27 the chain is Extracellular; sequence MELPSNLLPDEASPEWMNKGDNAWQLT. The helical transmembrane segment at 28–48 threads the bilayer; sequence AATMVGLQSIPGLVILYGSLV. Residues 49 to 51 lie on the Cytoplasmic side of the membrane; that stretch reads KKT. Residues 52-72 form a helical membrane-spanning segment; that stretch reads WAINSAFMAFYAFASVLLCWV. Residues 73–113 lie on the Extracellular side of the membrane; the sequence is SWAYQMSFGEKMVFFLGKPNVALDEKFLLGKAFLGNFPNAT. N-linked (GlcNAc...) asparagine glycosylation is present at Asn111. The chain crosses the membrane as a helical span at residues 114–134; that stretch reads MVFYQGVFAGLTLILIAGALL. The Cytoplasmic segment spans residues 135-141; sequence GRMNIRA. Residues 142–162 form a helical membrane-spanning segment; the sequence is WMLFVPLWVTFSYTVVAFSIW. Topologically, residues 163–175 are extracellular; that stretch reads CPDGWLAKRGVID. A helical membrane pass occupies residues 176 to 196; that stretch reads FAGGYVIHLSAGVAGFTAAYW. Residues 197-214 lie on the Cytoplasmic side of the membrane; sequence VGPRADKDRETFPAATNN. A helical transmembrane segment spans residues 215 to 235; the sequence is MIMVLAGAGLLWMGWSGFNGG. Residues 236–242 are Extracellular-facing; the sequence is APFVAST. The chain crosses the membrane as a helical span at residues 243-263; it reads IASLAILNTHVCTAASITVWV. The Cytoplasmic portion of the chain corresponds to 264 to 274; it reads MLDTFYFGKPT. Residues 275–295 form a helical membrane-spanning segment; sequence VFGAVQGMITGLVCITPAAGV. At 296–298 the chain is on the extracellular side; it reads VQG. The helical transmembrane segment at 299–319 threads the bilayer; the sequence is WAAILMGFISGSIPWYTMMVL. Topologically, residues 320–334 are cytoplasmic; sequence HNKVNFLKKIDDPMA. Residues 335–355 form a helical membrane-spanning segment; the sequence is VFHTHAIAGALGGILTGFFAV. Over 356–394 the chain is Extracellular; that stretch reads PKLCRLFYMVPDWEKYIGLAYGLQNKGATQAGLKQMVIQ. A helical membrane pass occupies residues 395–415; sequence IEAIVFVICYNVLMTSLICLI. Over 416–480 the chain is Cytoplasmic; it reads VRVIVPLRLN…SRSLGELQMV (65 aa).

Belongs to the ammonia transporter channel (TC 1.A.11.2) family.

It is found in the cell membrane. Functionally, involved in ammonium transport. May be involved in arbuscular mycorrhizal (AM) symbiosis with AM fungi. This is Ammonium transporter 2 member 4 from Medicago truncatula (Barrel medic).